Here is a 250-residue protein sequence, read N- to C-terminus: Doublesex- and mab-3-related transcription factor dmd-3 (250 aa).

The DM 1 DNA-binding region spans Cys19 to Arg68. Polar residues predominate over residues Cys90–Ser100. Residues Cys90–Pro115 are disordered. The span at Gly102 to Pro115 shows a compositional bias: basic and acidic residues. The segment at residues Cys117–Arg164 is a DNA-binding region (DM 2). The disordered stretch occupies residues Gln166–Ser201. Residues Glu169–Pro180 show a composition bias toward basic and acidic residues. A compositionally biased stretch (low complexity) spans Thr186 to Ser201.

Belongs to the DMRT family. As to expression, in males, expressed in the tail tip. Specifically, expressed in 15 male-specific muscles of the tail tip called the diagonal muscles, and also in core body muscles of both males and hermaphrodites. In males, expressed in ray A-neurons. In males, expressed in PHC sensory neurons. In males, it is also expressed in the hindgut, B lineage and somatic gonad. In hermaphrodites, expressed in the anchor cell only.

The protein resides in the nucleus. It is found in the perikaryon. Its function is as follows. Transcriptional activator which promotes male-specific development. Acts partially redundantly with the transcription factor mab-3 to coordinate tail tip cell fusion and retraction and thereby regulate male tail tip morphogenesis. This is most likely through the regulation of downstream effectors such as eff-1. May also negatively regulate the expression of other proteins implicated in male tail morphogenesis including nhr-25, vav-1 and arl-1 in tail tip cells. In males, plays a role in the development of ray A-neurons by negatively regulating the activity of the transcription factor ast-1. Plays a role in the male-specific differentiation of PHC sensory neurons into densely connected hub sensory neurons. Plays a role in male mating behavior. This Caenorhabditis elegans protein is Doublesex- and mab-3-related transcription factor dmd-3.